Reading from the N-terminus, the 172-residue chain is Small ribosomal subunit protein uS5 (172 aa).

In terms of domain architecture, S5 DRBM spans 17-80 (LREKMISVNR…DEARRKMVKV (64 aa)).

The protein belongs to the universal ribosomal protein uS5 family. As to quaternary structure, part of the 30S ribosomal subunit. Contacts proteins S4 and S8.

Its function is as follows. With S4 and S12 plays an important role in translational accuracy. In terms of biological role, located at the back of the 30S subunit body where it stabilizes the conformation of the head with respect to the body. In Cupriavidus pinatubonensis (strain JMP 134 / LMG 1197) (Cupriavidus necator (strain JMP 134)), this protein is Small ribosomal subunit protein uS5.